The primary structure comprises 395 residues: Elongation factor Tu (395 aa).

Residues 10 to 204 (KEHANIGTIG…AVDDYIPTPE (195 aa)) enclose the tr-type G domain. A G1 region spans residues 19 to 26 (GHVDHGKT). 19–26 (GHVDHGKT) serves as a coordination point for GTP. Thr26 is a binding site for Mg(2+). Positions 60-64 (GITIN) are G2. The segment at 81–84 (DCPG) is G3. Residues 81–85 (DCPGH) and 136–139 (NKAD) each bind GTP. Residues 136-139 (NKAD) are G4. Positions 174–176 (SAL) are G5.

The protein belongs to the TRAFAC class translation factor GTPase superfamily. Classic translation factor GTPase family. EF-Tu/EF-1A subfamily. As to quaternary structure, monomer.

It is found in the cytoplasm. The enzyme catalyses GTP + H2O = GDP + phosphate + H(+). GTP hydrolase that promotes the GTP-dependent binding of aminoacyl-tRNA to the A-site of ribosomes during protein biosynthesis. This Staphylococcus carnosus (strain TM300) protein is Elongation factor Tu.